Here is a 358-residue protein sequence, read N- to C-terminus: 3-dehydroquinate synthase (358 aa).

Residues 72–77, 106–110, 130–131, Lys-143, and Lys-151 contribute to the NAD(+) site; these read GGERVK, GALLD, and ST. Glu-184, His-245, and His-261 together coordinate Zn(2+).

The protein belongs to the sugar phosphate cyclases superfamily. Dehydroquinate synthase family. NAD(+) serves as cofactor. The cofactor is Co(2+). Zn(2+) is required as a cofactor.

It is found in the cytoplasm. It catalyses the reaction 7-phospho-2-dehydro-3-deoxy-D-arabino-heptonate = 3-dehydroquinate + phosphate. Its pathway is metabolic intermediate biosynthesis; chorismate biosynthesis; chorismate from D-erythrose 4-phosphate and phosphoenolpyruvate: step 2/7. Catalyzes the conversion of 3-deoxy-D-arabino-heptulosonate 7-phosphate (DAHP) to dehydroquinate (DHQ). The sequence is that of 3-dehydroquinate synthase (aroB) from Aeropyrum pernix (strain ATCC 700893 / DSM 11879 / JCM 9820 / NBRC 100138 / K1).